A 191-amino-acid chain; its full sequence is HTH-type transcriptional regulator YjdC (191 aa).

Residues 1–60 (MQREDVLGEALKLLELQGIANTTLEMVAERVDYPLDELRRFWPDKEAILYDALRYLSQQI) form the HTH tetR-type domain.

This chain is HTH-type transcriptional regulator YjdC (yjdC), found in Escherichia coli (strain K12).